We begin with the raw amino-acid sequence, 205 residues long: Orotate phosphoribosyltransferase (205 aa).

116 to 124 (EDIITTGGS) provides a ligand contact to 5-phospho-alpha-D-ribose 1-diphosphate. The orotate site is built by Thr120 and Arg148.

Belongs to the purine/pyrimidine phosphoribosyltransferase family. PyrE subfamily. Homodimer. Mg(2+) is required as a cofactor.

It catalyses the reaction orotidine 5'-phosphate + diphosphate = orotate + 5-phospho-alpha-D-ribose 1-diphosphate. It functions in the pathway pyrimidine metabolism; UMP biosynthesis via de novo pathway; UMP from orotate: step 1/2. Catalyzes the transfer of a ribosyl phosphate group from 5-phosphoribose 1-diphosphate to orotate, leading to the formation of orotidine monophosphate (OMP). This is Orotate phosphoribosyltransferase from Wolinella succinogenes (strain ATCC 29543 / DSM 1740 / CCUG 13145 / JCM 31913 / LMG 7466 / NCTC 11488 / FDC 602W) (Vibrio succinogenes).